We begin with the raw amino-acid sequence, 97 residues long: Integration host factor subunit alpha (97 aa).

It belongs to the bacterial histone-like protein family. In terms of assembly, heterodimer of an alpha and a beta chain.

In terms of biological role, this protein is one of the two subunits of integration host factor, a specific DNA-binding protein that functions in genetic recombination as well as in transcriptional and translational control. The protein is Integration host factor subunit alpha of Acinetobacter baylyi (strain ATCC 33305 / BD413 / ADP1).